A 146-amino-acid chain; its full sequence is Transcriptional regulator MraZ (146 aa).

2 consecutive SpoVT-AbrB domains span residues serine 4 to serine 46 and threonine 75 to lysine 118.

This sequence belongs to the MraZ family. Forms oligomers.

It is found in the cytoplasm. The protein localises to the nucleoid. This Mycoplasma mobile (strain ATCC 43663 / 163K / NCTC 11711) (Mesomycoplasma mobile) protein is Transcriptional regulator MraZ.